The chain runs to 178 residues: Caveolin-1 (178 aa).

Residue Ser-2 is modified to N-acetylserine. Ser-2 bears the Phosphoserine mark. The segment at Ser-2–Val-94 is required for homooligomerization. The Cytoplasmic segment spans residues Ser-2–Ser-104. N6-acetyllysine; alternate is present on Lys-5. Residue Lys-5 forms a Glycyl lysine isopeptide (Lys-Gly) (interchain with G-Cter in ubiquitin); alternate linkage. A Phosphotyrosine modification is found at Tyr-6. Ser-9 carries the phosphoserine modification. Residue Tyr-14 is modified to Phosphotyrosine; by ABL1. Residue Tyr-25 is modified to Phosphotyrosine. Residues Lys-26, Lys-30, Lys-39, Lys-47, and Lys-57 each participate in a glycyl lysine isopeptide (Lys-Gly) (interchain with G-Cter in ubiquitin) cross-link. The tract at residues Asp-82 to Val-94 is interaction with CAVIN3. Positions Ala-105–Leu-125 form an intramembrane region, helical. Residues His-126–Ile-178 lie on the Cytoplasmic side of the membrane. Positions Val-131–Gln-142 are interacts with SPRY1, SPRY2, SPRY3 and SPRY4. Residues Cys-133, Cys-143, and Cys-156 are each lipidated (S-palmitoyl cysteine). The interval Ser-149–Phe-160 is interacts with SPRY1, SPRY2, and SPRY4. The interacts with SPRY1, SPRY2, SPRY3 and SPRY4 stretch occupies residues Phe-167–Ile-178.

It belongs to the caveolin family. Homooligomer. Interacts with GLIPR2. Interacts with NOSTRIN. Interacts with SNAP25 and STX1A. Interacts (via the N-terminus) with DPP4; the interaction is direct. Interacts with CTNNB1, CDH1 and JUP. Interacts with PACSIN2; this interaction induces membrane tubulation. Interacts with SLC7A9. Interacts with BMX and BTK. Interacts with TGFBR1. Interacts with CAVIN3 (via leucine-zipper domain) in a cholesterol-sensitive manner. Interacts with CAVIN1. Interacts with EHD2 in a cholesterol-dependent manner. Forms a ternary complex with UBXN6 and VCP; mediates CAV1 targeting to lysosomes for degradation. Interacts with ABCG1; this interaction regulates ABCG1-mediated cholesterol efflux. Interacts with NEU3; this interaction enhances NEU3 sialidase activity within caveola. Interacts (via C-terminus) with SPRY1, SPRY2 (via C-terminus), SPRY3, and SPRY4. Interacts with IGFBP5; this interaction allows trafficking of IGFBP5 from the plasma membrane to the nucleus. Post-translationally, phosphorylated at Tyr-14 by ABL1 in response to oxidative stress. Ubiquitinated. Undergo monoubiquitination and multi- and/or polyubiquitination. Monoubiquitination of N-terminal lysines promotes integration in a ternary complex with UBXN6 and VCP which promotes oligomeric CAV1 targeting to lysosomes for degradation. Ubiquitinated by ZNRF1; leading to degradation and modulation of the TLR4-mediated immune response.

The protein resides in the golgi apparatus membrane. It localises to the cell membrane. It is found in the membrane. The protein localises to the caveola. Its subcellular location is the membrane raft. Its function is as follows. May act as a scaffolding protein within caveolar membranes. Forms a stable heterooligomeric complex with CAV2 that targets to lipid rafts and drives caveolae formation. Mediates the recruitment of CAVIN proteins (CAVIN1/2/3/4) to the caveolae. Interacts directly with G-protein alpha subunits and can functionally regulate their activity. Involved in the costimulatory signal essential for T-cell receptor (TCR)-mediated T-cell activation. Its binding to DPP4 induces T-cell proliferation and NF-kappa-B activation in a T-cell receptor/CD3-dependent manner. Recruits CTNNB1 to caveolar membranes and may regulate CTNNB1-mediated signaling through the Wnt pathway. Negatively regulates TGFB1-mediated activation of SMAD2/3 by mediating the internalization of TGFBR1 from membrane rafts leading to its subsequent degradation. Binds 20(S)-hydroxycholesterol (20(S)-OHC). The sequence is that of Caveolin-1 (CAV1) from Bos taurus (Bovine).